The following is a 306-amino-acid chain: Ribonuclease Z (306 aa).

Residues H63, H65, D67, H68, H142, D213, and H271 each contribute to the Zn(2+) site. The Proton acceptor role is filled by D67.

This sequence belongs to the RNase Z family. Homodimer. Zn(2+) is required as a cofactor.

The catalysed reaction is Endonucleolytic cleavage of RNA, removing extra 3' nucleotides from tRNA precursor, generating 3' termini of tRNAs. A 3'-hydroxy group is left at the tRNA terminus and a 5'-phosphoryl group is left at the trailer molecule.. Its function is as follows. Zinc phosphodiesterase, which displays some tRNA 3'-processing endonuclease activity. Probably involved in tRNA maturation, by removing a 3'-trailer from precursor tRNA. This is Ribonuclease Z from Oceanobacillus iheyensis (strain DSM 14371 / CIP 107618 / JCM 11309 / KCTC 3954 / HTE831).